The chain runs to 658 residues: DNA ligase (658 aa).

NAD(+) is bound by residues 31–35, 80–81, and Glu-110; these read DFEYD and SL. The active-site N6-AMP-lysine intermediate is the Lys-112. NAD(+) is bound by residues Arg-133, Glu-167, Lys-279, and Lys-303. Zn(2+) contacts are provided by Cys-397, Cys-400, Cys-415, and Cys-420. One can recognise a BRCT domain in the interval 584-654; it reads DTASIYFQKS…KALNIPIINE (71 aa).

This sequence belongs to the NAD-dependent DNA ligase family. LigA subfamily. Mg(2+) is required as a cofactor. It depends on Mn(2+) as a cofactor.

The enzyme catalyses NAD(+) + (deoxyribonucleotide)n-3'-hydroxyl + 5'-phospho-(deoxyribonucleotide)m = (deoxyribonucleotide)n+m + AMP + beta-nicotinamide D-nucleotide.. In terms of biological role, DNA ligase that catalyzes the formation of phosphodiester linkages between 5'-phosphoryl and 3'-hydroxyl groups in double-stranded DNA using NAD as a coenzyme and as the energy source for the reaction. It is essential for DNA replication and repair of damaged DNA. This Mycoplasma pneumoniae (strain ATCC 29342 / M129 / Subtype 1) (Mycoplasmoides pneumoniae) protein is DNA ligase.